Consider the following 135-residue polypeptide: UPF0102 protein Mjls_1965 (135 aa).

It belongs to the UPF0102 family.

In Mycobacterium sp. (strain JLS), this protein is UPF0102 protein Mjls_1965.